The sequence spans 902 residues: AAA+ ATPase ClpV1 (902 aa).

The 142-residue stretch at 10-151 folds into the Clp R domain; it reads FGKLNSLAYK…KVEALTERFD (142 aa). Repeat stretches follow at residues 13 to 78 and 88 to 151; these read LNSL…LDRL and LSSH…ERFD. 237–244 lines the ATP pocket; that stretch reads GEAGVGKT. A coiled-coil region spans residues 441-559; it reads AEVDDSRRRI…AQLSALQGEE (119 aa). Residue 640–647 coordinates ATP; the sequence is GTSGVGKT.

It belongs to the ClpA/ClpB family. Interacts with TagJ.

The protein localises to the cytoplasm. Functionally, component of the H1 type VI (H1-T6SS) secretion system that plays a role in the release of toxins targeting both eukaryotic and prokaryotic species. Acts as an AAA(+) ATPase that disassembles the contracted sheath, which resets the systems for reassembly of an extended sheath that is ready to fire again. In Pseudomonas aeruginosa (strain ATCC 15692 / DSM 22644 / CIP 104116 / JCM 14847 / LMG 12228 / 1C / PRS 101 / PAO1), this protein is AAA+ ATPase ClpV1 (clpV1).